The chain runs to 768 residues: Translation initiation factor IF-2, chloroplastic (768 aa).

Disordered stretches follow at residues 1–20 (MFLN…SNIN), 54–77 (KSES…DKKS), and 155–176 (KKVA…PPES). The span at 54–65 (KSESHTGGEQHL) shows a compositional bias: basic and acidic residues. Residues 160–176 (TPSQNSASIQSNSPPES) are compositionally biased toward polar residues. The region spanning 261–434 (KRPPIVTVMG…TLLAELEDLK (174 aa)) is the tr-type G domain. GTP is bound by residues 270–277 (GHVDHGKT), 320–324 (DTPGH), and 374–377 (SKID).

Belongs to the TRAFAC class translation factor GTPase superfamily. Classic translation factor GTPase family. IF-2 subfamily.

It localises to the plastid. The protein resides in the chloroplast. One of the essential components for the initiation of protein synthesis. Protects formylmethionyl-tRNA from spontaneous hydrolysis and promotes its binding to the 30S ribosomal subunits. Also involved in the hydrolysis of GTP during the formation of the 70S ribosomal complex. This is Translation initiation factor IF-2, chloroplastic (infB) from Pyropia yezoensis (Susabi-nori).